A 389-amino-acid polypeptide reads, in one-letter code: MSDIAPVTNTPYIPPTPEVGLPLWLLAELTYRCPLQCPYCSNPLDFAKQGQELSTEQWFKVMQEAREMGAAQIGFSGGEPLVRQDLAELIAEARRLGFYTNLITSGIGLTEEKIIAFKEAGLDHIQISFQASDEQVNNMLAGSKKAFAQKLEMARAVKRHGYPMVLNFVTHRHNIDRIDKIIELCLALEADFVELATCQFYGWAHLNRLGLLPTKDQLVRAEAVTNEYRARLEAENHPCKLIFVTPDYYEERPKACMNGWGNIFLTVTPDGTALPCHGARQMPIQFPNVRDHSMQHIWYDSFGFNRFRGYDWMPEPCRSCDEKEKDFGGCRCQAFMLTGDAANADPVCSKSYHHGIITQARDESETATQTIEELAFRNDRNSRLIAKSS.

A Radical SAM core domain is found at 19-234 (VGLPLWLLAE…TNEYRARLEA (216 aa)). Residues C33, C37, and C40 each coordinate [4Fe-4S] cluster.

It belongs to the radical SAM superfamily. PqqE family. As to quaternary structure, interacts with PqqD. The interaction is necessary for activity of PqqE. The cofactor is [4Fe-4S] cluster.

It catalyses the reaction [PQQ precursor protein] + S-adenosyl-L-methionine = E-Y cross-linked-[PQQ precursor protein] + 5'-deoxyadenosine + L-methionine + H(+). It functions in the pathway cofactor biosynthesis; pyrroloquinoline quinone biosynthesis. Functionally, catalyzes the cross-linking of a glutamate residue and a tyrosine residue in the PqqA protein as part of the biosynthesis of pyrroloquinoline quinone (PQQ). This chain is PqqA peptide cyclase, found in Pseudomonas syringae pv. syringae (strain B728a).